A 371-amino-acid polypeptide reads, in one-letter code: Interstrand DNA cross-link repair glycosylase (371 aa).

Positions 37–39 (QAQ) match the QXQ; important for activity motif.

Belongs to the DNA glycosylase AlkZ-like family.

In terms of biological role, DNA glycosylase involved in the repair of interstrand DNA cross-links (ICLs), which are highly toxic DNA lesions that covalently tether the opposing strands of DNA, thereby inhibiting essential cellular processes such as DNA replication and transcription. Acts by unhooking both sides of the ICLs, forming abasic (AP) sites on both strands. AlkZ specifically repairs DNA damage induced by azinomycin B (AZB), a natural product with potent antibiotic and antitumor activities that interacts covalently with duplex DNA and forms ICLs. AlkZ thus confers self-resistance to azinomycin B, which is produced by S.sahachiroi. It may also protect target sites by protein-DNA interaction. Binds sequence non-specifically to native DNA and structure-specifically to azinomycin B-modified sites, with higher affinity to azinomycin B-modified sites and lower affinity to native DNA duplex. In vitro, also acts on monoadducts and can catalyze the excision of N7-methylguanine (7mGua) from an oligonucleotide containing N7-methyldeoxyguanosine (d7mG). Is a monofunctional DNA glycosylase that does not have lyase activity. The polypeptide is Interstrand DNA cross-link repair glycosylase (Streptomyces sahachiroi).